The following is a 358-amino-acid chain: DNA replication and repair protein RecF (358 aa).

An ATP-binding site is contributed by 33–40; it reads GENGAGKT.

This sequence belongs to the RecF family.

It localises to the cytoplasm. In terms of biological role, the RecF protein is involved in DNA metabolism; it is required for DNA replication and normal SOS inducibility. RecF binds preferentially to single-stranded, linear DNA. It also seems to bind ATP. In Deinococcus geothermalis (strain DSM 11300 / CIP 105573 / AG-3a), this protein is DNA replication and repair protein RecF.